Consider the following 358-residue polypeptide: Probable branched-chain-amino-acid aminotransferase (358 aa).

Residue Lys196 is modified to N6-(pyridoxal phosphate)lysine.

Belongs to the class-IV pyridoxal-phosphate-dependent aminotransferase family. Pyridoxal 5'-phosphate is required as a cofactor.

It carries out the reaction L-leucine + 2-oxoglutarate = 4-methyl-2-oxopentanoate + L-glutamate. The enzyme catalyses L-isoleucine + 2-oxoglutarate = (S)-3-methyl-2-oxopentanoate + L-glutamate. The catalysed reaction is L-valine + 2-oxoglutarate = 3-methyl-2-oxobutanoate + L-glutamate. It participates in amino-acid biosynthesis; L-isoleucine biosynthesis; L-isoleucine from 2-oxobutanoate: step 4/4. Its pathway is amino-acid biosynthesis; L-leucine biosynthesis; L-leucine from 3-methyl-2-oxobutanoate: step 4/4. It functions in the pathway amino-acid biosynthesis; L-valine biosynthesis; L-valine from pyruvate: step 4/4. Acts on leucine, isoleucine and valine. This Staphylococcus epidermidis (strain ATCC 35984 / DSM 28319 / BCRC 17069 / CCUG 31568 / BM 3577 / RP62A) protein is Probable branched-chain-amino-acid aminotransferase (ilvE).